Consider the following 165-residue polypeptide: Peptide methionine sulfoxide reductase MsrA (165 aa).

Residue Cys11 is part of the active site.

Belongs to the MsrA Met sulfoxide reductase family.

It carries out the reaction L-methionyl-[protein] + [thioredoxin]-disulfide + H2O = L-methionyl-(S)-S-oxide-[protein] + [thioredoxin]-dithiol. It catalyses the reaction [thioredoxin]-disulfide + L-methionine + H2O = L-methionine (S)-S-oxide + [thioredoxin]-dithiol. Has an important function as a repair enzyme for proteins that have been inactivated by oxidation. Catalyzes the reversible oxidation-reduction of methionine sulfoxide in proteins to methionine. The polypeptide is Peptide methionine sulfoxide reductase MsrA (Ureaplasma parvum serovar 3 (strain ATCC 27815 / 27 / NCTC 11736)).